The primary structure comprises 323 residues: Arginase, hepatic (323 aa).

Residues H102, D125, H127, and D129 each contribute to the Mn(2+) site. Substrate contacts are provided by residues 127-131 (HADIN), 138-140 (SGN), and D184. Residues D233 and D235 each coordinate Mn(2+). Residues T247 and E278 each contribute to the substrate site.

It belongs to the arginase family. As to quaternary structure, homotrimer. The cofactor is Mn(2+).

The enzyme catalyses L-arginine + H2O = urea + L-ornithine. The protein operates within nitrogen metabolism; urea cycle; L-ornithine and urea from L-arginine: step 1/1. The protein is Arginase, hepatic of Aquarana catesbeiana (American bullfrog).